A 268-amino-acid polypeptide reads, in one-letter code: Imidazole glycerol phosphate synthase subunit HisF (268 aa).

Active-site residues include Asp12 and Asp131.

Belongs to the HisA/HisF family. Heterodimer of HisH and HisF.

Its subcellular location is the cytoplasm. It catalyses the reaction 5-[(5-phospho-1-deoxy-D-ribulos-1-ylimino)methylamino]-1-(5-phospho-beta-D-ribosyl)imidazole-4-carboxamide + L-glutamine = D-erythro-1-(imidazol-4-yl)glycerol 3-phosphate + 5-amino-1-(5-phospho-beta-D-ribosyl)imidazole-4-carboxamide + L-glutamate + H(+). It participates in amino-acid biosynthesis; L-histidine biosynthesis; L-histidine from 5-phospho-alpha-D-ribose 1-diphosphate: step 5/9. Its function is as follows. IGPS catalyzes the conversion of PRFAR and glutamine to IGP, AICAR and glutamate. The HisF subunit catalyzes the cyclization activity that produces IGP and AICAR from PRFAR using the ammonia provided by the HisH subunit. The polypeptide is Imidazole glycerol phosphate synthase subunit HisF (Chelativorans sp. (strain BNC1)).